The sequence spans 825 residues: MDVSLCPAKCSFWRIFLLGSVWLDYVGSVLACPANCVCSKTEINCRRPDDGNLFPLLEGQDSGNSNGNASINITDISRNITSIHIENWRGLHTLNAVDMELYTGLQKLTIKNSGLRSIQPRAFAKNPHLRYINLSSNRLTTLSWQLFQTLSLRELRLEQNFFNCSCDIRWMQLWQEQGEAKLNSQSLYCISADGSQLPLFRMNISQCDLPEISVSHVNLTVREGDNAVVTCNGSGSPLPDVDWIVTGLQSINTHQTNLNWTNVHAINLTLVNVTSEDNGFTLTCIAENVVGMSNASVALTVHYPPRVVSLEEPELRLEHCIEFVVRGNPPPTLHWLHNGQPLRESKITHVEYYQEGEVSEGCLLFNKPTHYNNGNYTLNRQEPLGTANQTINGHFLKEPFPESTDNFVSFYEVSPTPPITVTHKPEEDTFGVSIAVGLAAFACVLLVVLFIMINKYGRRSKFGMKGPVAVISGEEDSASPLHHDQPWHHHTLITGRRAGHSVIGMTRIPVIENPQYFRQGHNCHKPDTYVQHIKRRDIVLKRELGEGAFGKVFLAECYNLSPTKVKMLVAVKALKDPTLAARKDFQREAELLTNLQHEHIVKFYGVCGDGDPLIMVFEYMKHGDLNKFLRAHGPDAMILVDGQPRQAKGELGLSQMLHIASQICSGMVYLASQHFVHRDLATRNCLVGANLLVKIGDFGMSRDVYSTDYYRVGGHTMLPIRWMPPESIMYRKFTTESDVWSFGVILWEIFTYGKQPWFQLSNTEVIECITQGRVLERPRVCPKEVYDVMLGCWQREPQQRLNIKEIYKILHALGKATPIYLDILG.

Positions 1–31 are cleaved as a signal peptide; that stretch reads MDVSLCPAKCSFWRIFLLGSVWLDYVGSVLA. 2 cysteine pairs are disulfide-bonded: C32–C38 and C36–C45. Residues 32–429 are Extracellular-facing; it reads CPANCVCSKT…TVTHKPEEDT (398 aa). N-linked (GlcNAc...) asparagine glycosylation is found at N68, N72, and N79. 2 LRR repeats span residues 104-125 and 128-149; these read GLQK…AFAK and HLRY…LFQT. N-linked (GlcNAc...) asparagine glycosylation is found at N133 and N163. In terms of domain architecture, LRRCT spans 160-209; it reads NFFNCSCDIRWMQLWQEQGEAKLNSQSLYCISADGSQLPLFRMNISQCDL. Disulfide bonds link C164–C189 and C166–C207. N-linked (GlcNAc...) asparagine glycosylation is found at N203, N218, N232, N259, N267, N272, and N294. Ig-like C2-type domains lie at 210–300 and 309–382; these read PEIS…VALT and SLEE…NRQE. C231 and C284 are oxidised to a cystine. C320 and C362 are disulfide-bonded. 2 N-linked (GlcNAc...) asparagine glycosylation sites follow: N375 and N388. A helical membrane pass occupies residues 430–453; sequence FGVSIAVGLAAFACVLLVVLFIMI. Topologically, residues 454–825 are cytoplasmic; sequence NKYGRRSKFG…ATPIYLDILG (372 aa). Y516 carries the post-translational modification Phosphotyrosine; by autocatalysis. In terms of domain architecture, Protein kinase spans 538–814; the sequence is IVLKRELGEG…EIYKILHALG (277 aa). ATP-binding positions include 544-552 and K572; that span reads LGEGAFGKV. D679 functions as the Proton acceptor in the catalytic mechanism. Phosphotyrosine; by autocatalysis occurs at positions 705, 709, 710, and 820.

Belongs to the protein kinase superfamily. Tyr protein kinase family. Insulin receptor subfamily. As to quaternary structure, exists in a dynamic equilibrium between monomeric (low affinity) and dimeric (high affinity) structures. Binds SH2B2. Interacts with SQSTM1 and KIDINS220. Interacts with PTPRS. Interacts with MAPK8IP3/JIP3. Post-translationally, ligand-mediated auto-phosphorylation. As to expression, preferentially in the brain, low levels in the ovaries.

It localises to the membrane. It catalyses the reaction L-tyrosyl-[protein] + ATP = O-phospho-L-tyrosyl-[protein] + ADP + H(+). Functionally, receptor tyrosine kinase involved in nervous system and probably heart development. Upon binding of its ligand NTF3/neurotrophin-3, NTRK3 autophosphorylates and activates different signaling pathways, including the phosphatidylinositol 3-kinase/AKT and the MAPK pathways, that control cell survival and differentiation. The polypeptide is NT-3 growth factor receptor (NTRK3) (Sus scrofa (Pig)).